The chain runs to 20 residues: Pregnancy-associated glycoprotein 60H (20 aa).

Residue Asn-4 is glycosylated (N-linked (GlcNAc...) asparagine).

This sequence belongs to the peptidase A1 family. In terms of tissue distribution, chorionic epithelium (trophectoderm) and placental cotyledons.

The protein resides in the secreted. Its subcellular location is the extracellular space. The polypeptide is Pregnancy-associated glycoprotein 60H (Bison bonasus (European bison)).